The sequence spans 597 residues: MEFPGSSDNYLTITGPGHPFLTGTETFHTPSLGDEEFEIPPISLDSDPSLAVSDVVGHFDDLGDPSGVQDEGFATQYGVQTLDMPVEMTHEVMDQTGGLLGAGLAMDLDHPIVTPYSANPPVTIDVSMTDMSSGILGHSQLTTIDQSELSSQLGLSLGGGAILHPVQSPEDHLSPTPSPTSSLHDEDMEDFRRITAPKNIIVEQAKKPKTPKKKKKKDPNEPQKPLSAYALFFRDTQAAIKGQNPNATFGEVSKIVASMWDSLGEEQKQVYKRKTEAAKKEYLKALALYKANQLSQVAVDTVDLDPPAVPALLSESPVPSPSVVTATSIPECVSSPSAPSPPSQTVALPQQSIAKIIISKQILPAGQNPTSIALSQGVVTVIPATVVTSRGLPLAQLQPSPQAQRVTRSVLQAAMQMPPRLQPPPLQQMQQPPRLQQMAPAQQPSITILQSPPPLQPMQKVRLTLQQPPPLQIKIIPPPLQPQPQAVQVQNQSLSVINVSTSPEAPASPPEQLEVLPEVVQEESPPPQMDVELVSSSPPPSLSPQPRCVRSGCENAPIECKDWDNEYCSNECVVKHCRDTFMAWIAARSQGTLATVK.

Disordered regions lie at residues 160–224 (GAIL…EPQK) and 520–546 (VQEE…SPQP). Residues 207–217 (KPKTPKKKKKK) are compositionally biased toward basic residues. The short motif at 212-217 (KKKKKK) is the Nuclear localization signal element. Residues 222–290 (PQKPLSAYAL…EYLKALALYK (69 aa)) constitute a DNA-binding region (HMG box).

As to quaternary structure, component of the PNUTS-PP1 phosphatase complex.

The protein localises to the nucleus. The protein resides in the chromosome. Transcription factor that modulates cell fate reprogramming from the somatic state to the pluripotent and neuronal fate. Also acts as a regulatory component of protein phosphatase 1 (PP1) complexes. Component of the PNUTS-PP1 protein phosphatase complex, a PP1 complex that regulates RNA polymerase II transcription pause-release. PNUTS-PP1 also plays a role in the control of chromatin structure and cell cycle progression during the transition from mitosis into interphase. This chain is TOX high mobility group box family member 4 (tox4), found in Xenopus tropicalis (Western clawed frog).